The following is a 334-amino-acid chain: Glyceraldehyde-3-phosphate dehydrogenase (334 aa).

NAD(+) is bound by residues 12–13 (TI) and glycine 111. A D-glyceraldehyde 3-phosphate-binding site is contributed by 140-142 (SCN). Cysteine 141 (nucleophile) is an active-site residue. Arginine 167 lines the NAD(+) pocket. 192–193 (HG) contacts D-glyceraldehyde 3-phosphate. An NAD(+)-binding site is contributed by glutamine 298.

Belongs to the glyceraldehyde-3-phosphate dehydrogenase family. As to quaternary structure, homotetramer.

The protein resides in the cytoplasm. The catalysed reaction is D-glyceraldehyde 3-phosphate + phosphate + NADP(+) = (2R)-3-phospho-glyceroyl phosphate + NADPH + H(+). The enzyme catalyses D-glyceraldehyde 3-phosphate + phosphate + NAD(+) = (2R)-3-phospho-glyceroyl phosphate + NADH + H(+). It functions in the pathway carbohydrate degradation; glycolysis; pyruvate from D-glyceraldehyde 3-phosphate: step 1/5. This is Glyceraldehyde-3-phosphate dehydrogenase (gap) from Pyrococcus abyssi (strain GE5 / Orsay).